Here is a 428-residue protein sequence, read N- to C-terminus: Glutamyl-tRNA reductase (428 aa).

Residues 55–58 (TCNR), serine 114, 119–121 (ETQ), and glutamine 125 each bind substrate. The Nucleophile role is filled by cysteine 56. 194-199 (GAGEMI) serves as a coordination point for NADP(+).

It belongs to the glutamyl-tRNA reductase family. Homodimer.

The enzyme catalyses (S)-4-amino-5-oxopentanoate + tRNA(Glu) + NADP(+) = L-glutamyl-tRNA(Glu) + NADPH + H(+). Its pathway is porphyrin-containing compound metabolism; protoporphyrin-IX biosynthesis; 5-aminolevulinate from L-glutamyl-tRNA(Glu): step 1/2. Functionally, catalyzes the NADPH-dependent reduction of glutamyl-tRNA(Glu) to glutamate 1-semialdehyde (GSA). This Paraburkholderia phytofirmans (strain DSM 17436 / LMG 22146 / PsJN) (Burkholderia phytofirmans) protein is Glutamyl-tRNA reductase.